We begin with the raw amino-acid sequence, 98 residues long: MPRSLKKGPFIDIKLEKRILEMNSKGEKKVVKTWSRSSMISPDFVGHTVAVHNGKSHVPVYVGDNMVGHKLGEFAPTRNYRGHAGGKSEKGGSAPRKK.

The interval 74–98 (FAPTRNYRGHAGGKSEKGGSAPRKK) is disordered.

The protein belongs to the universal ribosomal protein uS19 family.

Protein S19 forms a complex with S13 that binds strongly to the 16S ribosomal RNA. The protein is Small ribosomal subunit protein uS19 of Chlorobium chlorochromatii (strain CaD3).